The sequence spans 231 residues: MDARNRLIVGLDVATVTEAEKLVSTLAEDVTFYKIGYQLAFAGGLEFARDLAQSGKKVFLDMKLLDIDNTVASAVENIVRMGMTMLTLHAYPKAMQAAVEAAQGSGLCLLGVTVLTSMDDQDLNDAGYQGDARSLVLKRAAQAKEKGMGGIVCSAQEAQAVRAILGSDMAIVTPGIRPAGSDAGDQKRVMTPADAIHAGSSHLVVGRPIVKADDPRAATQVILAEMQAAFT.

Substrate-binding positions include aspartate 12, lysine 34, 61-70 (DMKLLDIDNT), threonine 116, arginine 177, glutamine 186, glycine 206, and arginine 207. Catalysis depends on lysine 63, which acts as the Proton donor.

This sequence belongs to the OMP decarboxylase family. Type 1 subfamily. In terms of assembly, homodimer.

It catalyses the reaction orotidine 5'-phosphate + H(+) = UMP + CO2. The protein operates within pyrimidine metabolism; UMP biosynthesis via de novo pathway; UMP from orotate: step 2/2. Its function is as follows. Catalyzes the decarboxylation of orotidine 5'-monophosphate (OMP) to uridine 5'-monophosphate (UMP). This chain is Orotidine 5'-phosphate decarboxylase, found in Allorhizobium ampelinum (strain ATCC BAA-846 / DSM 112012 / S4) (Agrobacterium vitis (strain S4)).